The chain runs to 501 residues: Lycopene beta cyclase, chloroplastic (501 aa).

A chloroplast-targeting transit peptide spans Met-1–Ser-48. Val-49 carries the post-translational modification N-acetylvaline. Residue Leu-85 to Pro-113 coordinates NAD(+).

This sequence belongs to the lycopene cyclase family.

The protein resides in the plastid. It is found in the chloroplast. It catalyses the reaction a carotenoid psi-end group = a carotenoid beta-end derivative. The protein operates within carotenoid biosynthesis; beta-carotene biosynthesis. It functions in the pathway carotenoid biosynthesis; beta-zeacarotene biosynthesis. In terms of biological role, involved in carotenoid biosynthesis. Catalyzes the double cyclization reaction which converts lycopene to beta-carotene and neurosporene to beta-zeacarotene. Major lycopene beta-cyclase that does not seem to be involved in neoxanthin synthesis. Involved in salt tolerance improvement by increasing synthesis of carotenoids, which impairs reactive oxygen species (ROS) and protects the photosynthetic system under salt stress. This chain is Lycopene beta cyclase, chloroplastic, found in Arabidopsis thaliana (Mouse-ear cress).